Consider the following 299-residue polypeptide: ATP phosphoribosyltransferase (299 aa).

This sequence belongs to the ATP phosphoribosyltransferase family. Long subfamily. Mg(2+) serves as cofactor.

Its subcellular location is the cytoplasm. The enzyme catalyses 1-(5-phospho-beta-D-ribosyl)-ATP + diphosphate = 5-phospho-alpha-D-ribose 1-diphosphate + ATP. It participates in amino-acid biosynthesis; L-histidine biosynthesis; L-histidine from 5-phospho-alpha-D-ribose 1-diphosphate: step 1/9. Its activity is regulated as follows. Feedback inhibited by histidine. Catalyzes the condensation of ATP and 5-phosphoribose 1-diphosphate to form N'-(5'-phosphoribosyl)-ATP (PR-ATP). Has a crucial role in the pathway because the rate of histidine biosynthesis seems to be controlled primarily by regulation of HisG enzymatic activity. The protein is ATP phosphoribosyltransferase of Shewanella sediminis (strain HAW-EB3).